A 71-amino-acid polypeptide reads, in one-letter code: MTQLLLFLVALLVLGHVPSGRSEFKRCWKGQGACRTYCTRQETYMHLCPDASLCCLSYALKPPPVPKHEYE.

A signal peptide spans Met1–Ser22. Disulfide bonds link Cys27-Cys54, Cys34-Cys48, and Cys38-Cys55.

Belongs to the beta-defensin family.

Its subcellular location is the secreted. In terms of biological role, has antibacterial activity. This chain is Beta-defensin 124 (DEFB124), found in Pan troglodytes (Chimpanzee).